The following is a 267-amino-acid chain: MAGNFWQSSHSQQWILDKQDLLRERQHDLLSLNEDEYQKVFIFFANVIQVLGEQLKLRQQVIATATVYFKRFYARNSLKNIDPLLLAPTCILLASKVEEFGVISNSRLISICQSAIKTKFSYAYTQEFPYRTNHILECEFYLLENLDCCLIVYQPYRPLLQLVQDMGQEDQLLTLSWRIVNDSLRTDVCLLYPPYQIAIACLQIACVILQKDSTKQWFAELNVDLDKVQEIVRAIVNLYEMWKDWKEKDEIQMLLSKIPKPKPPPQR.

In terms of domain architecture, Cyclin N-terminal spans 48–151 (IQVLGEQLKL…LLENLDCCLI (104 aa)).

The protein belongs to the cyclin family. Cyclin C subfamily. Component of the Cdk8 module of the Mediator complex.

Its subcellular location is the nucleus. Its function is as follows. Component of the Mediator complex, a coactivator involved in regulated gene transcription of nearly all RNA polymerase II-dependent genes. Mediator functions as a bridge to convey information from gene-specific regulatory proteins to the basal RNA polymerase II transcription machinery. Mediator is recruited to promoters by direct interactions with regulatory proteins and serves as a scaffold for the assembly of a functional preinitiation complex with RNA polymerase II and the general transcription factors. Binds to and activates cyclin-dependent kinase Cdk8 that phosphorylates the CTD (C-terminal domain) of the large subunit of RNA polymerase II (RNAp II), which may inhibit the formation of a transcription initiation complex. This is Cyclin-C (CycC) from Drosophila pseudoobscura pseudoobscura (Fruit fly).